A 143-amino-acid chain; its full sequence is Large ribosomal subunit protein uL11 (143 aa).

The protein belongs to the universal ribosomal protein uL11 family. Part of the ribosomal stalk of the 50S ribosomal subunit. Interacts with L10 and the large rRNA to form the base of the stalk. L10 forms an elongated spine to which L12 dimers bind in a sequential fashion forming a multimeric L10(L12)X complex. Post-translationally, one or more lysine residues are methylated.

In terms of biological role, forms part of the ribosomal stalk which helps the ribosome interact with GTP-bound translation factors. This chain is Large ribosomal subunit protein uL11, found in Azoarcus sp. (strain BH72).